A 468-amino-acid polypeptide reads, in one-letter code: UDP-glycosyltransferase 89B2 (468 aa).

UDP-alpha-D-glucose contacts are provided by residues serine 287, 347 to 348 (WV), 365 to 373 (HCGWNSVME), and 387 to 390 (SADQ).

This sequence belongs to the UDP-glycosyltransferase family.

In terms of biological role, may glycosylate diterpenes or flavonols in leaves. The sequence is that of UDP-glycosyltransferase 89B2 from Stevia rebaudiana (Stevia).